The following is a 302-amino-acid chain: Ventral anterior homeobox 2a (302 aa).

Disordered stretches follow at residues 1–35 (MFDQ…RDKG), 50–73 (KDIP…SQST), 156–175 (RRTK…SSST), 199–223 (PPNL…LGTS), and 282–302 (AFEP…KSTS). The homeobox DNA-binding region spans 105–164 (PKRTRTSFTAEQLYRLELEFQRCQYVVGRERTELARQLNLSETQVKVWFQNRRTKQKKDQ). The span at 161–172 (KKDQSRDSEKRS) shows a compositional bias: basic and acidic residues. Positions 204-223 (SSSQNNMGTSSGNGTNLGTS) are enriched in low complexity. The segment covering 287–296 (TRLDRKDTAS) has biased composition (basic and acidic residues).

Belongs to the EMX homeobox family.

It localises to the nucleus. Transcription factor that may function in dorsoventral specification of the forebrain. Regulates the expression of Wnt signaling antagonists including the expression of a truncated tcf7l2 isoform that cannot bind ctnnb1 and acts therefore as a potent dominant-negative Wnt antagonist. Plays a crucial role in eye development and, in particular, in the specification of the ventral optic vesicle. May be a regulator of axial polarization in the retina. The polypeptide is Ventral anterior homeobox 2a (vax2-a) (Xenopus laevis (African clawed frog)).